The primary structure comprises 72 residues: Antitoxin VapB11 (72 aa).

Antitoxin component of a type II toxin-antitoxin (TA) system. The protein is Antitoxin VapB11 (vapB11) of Mycobacterium tuberculosis (strain CDC 1551 / Oshkosh).